Here is a 92-residue protein sequence, read N- to C-terminus: Large ribosomal subunit protein bL34m (92 aa).

A mitochondrion-targeting transit peptide spans 1–46; that stretch reads MAVLAGSLLGPTSRSAALLGGRWLQPRAWLGFPDAWGLPTPQQARG. Serine 71 bears the Phosphoserine mark.

This sequence belongs to the bacterial ribosomal protein bL34 family. Component of the mitochondrial large ribosomal subunit (mt-LSU). Mature mammalian 55S mitochondrial ribosomes consist of a small (28S) and a large (39S) subunit. The 28S small subunit contains a 12S ribosomal RNA (12S mt-rRNA) and 30 different proteins. The 39S large subunit contains a 16S rRNA (16S mt-rRNA), a copy of mitochondrial valine transfer RNA (mt-tRNA(Val)), which plays an integral structural role, and 52 different proteins.

Its subcellular location is the mitochondrion. The polypeptide is Large ribosomal subunit protein bL34m (MRPL34) (Homo sapiens (Human)).